The chain runs to 207 residues: Dephospho-CoA kinase (207 aa).

The 200-residue stretch at 4 to 203 (VIGLTGGIAS…EEGYIEKPNY (200 aa)) folds into the DPCK domain. 12 to 17 (ASGKST) contacts ATP.

It belongs to the CoaE family.

The protein resides in the cytoplasm. The catalysed reaction is 3'-dephospho-CoA + ATP = ADP + CoA + H(+). Its pathway is cofactor biosynthesis; coenzyme A biosynthesis; CoA from (R)-pantothenate: step 5/5. In terms of biological role, catalyzes the phosphorylation of the 3'-hydroxyl group of dephosphocoenzyme A to form coenzyme A. In Staphylococcus aureus (strain bovine RF122 / ET3-1), this protein is Dephospho-CoA kinase.